Consider the following 982-residue polypeptide: Mineralocorticoid receptor (982 aa).

The segment at 1 to 601 (METKGYHSLP…STGSSRPSKI (601 aa)) is modulating. A compositionally biased stretch (polar residues) spans 230–242 (QGTPLTCSPNVEN). 2 disordered regions span residues 230–328 (QGTP…AAST) and 345–375 (SGTSAGSSTSRDVVPSPDTQEKGAQEVPFPK). A phosphoserine mark is found at Ser249, Ser258, Ser282, Ser286, and Ser298. Residues 258-299 (SPLSSPLSSMKSSISSPPSHCSVKSPVSSPNNVTPRSSVSSP) are compositionally biased toward low complexity. A compositionally biased stretch (polar residues) spans 300–328 (ANINNSRCSVSSPSNTNNRSTLSSPAAST). Residues 345-354 (SGTSAGSSTS) are compositionally biased toward low complexity. Zn(2+) is bound by residues Cys602, Cys605, Cys619, Cys622, Cys638, Cys644, Cys654, and Cys657. NR C4-type zinc fingers lie at residues 602-622 (CLVCGDEASGCHYGVVTCGSC) and 638-662 (CAGRNDCIIDKIRRKNCPACRLQKC). The nuclear receptor DNA-binding region spans 602 to 667 (CLVCGDEASG…RLQKCLQAGM (66 aa)). Residues 668–723 (NLGARRSKKLGKLKGIHEEQPQQQPPPPPPPPQSPEEGTTYIAPAKEPSVNTALVP) form a hinge region. Residues 682-708 (GIHEEQPQQQPPPPPPPPQSPEEGTTY) form a disordered region. Residues 690–701 (QQPPPPPPPPQS) show a composition bias toward pro residues. Residues 724 to 962 (QLSAISRALT…EFPAMLVEII (239 aa)) form the NR LBD domain. 21-hydroxyprogesterone is bound by residues Asn768 and Gln774. Residues Asn768 and Gln774 each contribute to the aldosterone site. Progesterone-binding residues include Asn768 and Gln774. Residues 780–783 (KWAK) are important for coactivator binding. Arg815 and Thr943 together coordinate 21-hydroxyprogesterone. The aldosterone site is built by Arg815 and Thr943. Progesterone-binding residues include Arg815 and Thr943.

It belongs to the nuclear hormone receptor family. NR3 subfamily. Phosphorylated. In terms of tissue distribution, expressed in hippocampus, being restricted to the more superficial cortical layers.

The protein resides in the cytoplasm. It is found in the nucleus. Receptor for both mineralocorticoids (MC) such as aldosterone and glucocorticoids (GC) such as corticosterone or cortisol. Binds to mineralocorticoid response elements (MRE) and transactivates target genes. The effect of MC is to increase ion and water transport and thus raise extracellular fluid volume and blood pressure and lower potassium levels. The chain is Mineralocorticoid receptor (NR3C2) from Saimiri sciureus (Common squirrel monkey).